The chain runs to 356 residues: 45 kDa calcium-binding protein (356 aa).

A signal peptide spans 1–29 (MMSRQAFLCSLGSLYLSLLFVFLLMDVYA). Residue Asn-33 is glycosylated (N-linked (GlcNAc...) asparagine). 5 consecutive EF-hand domains span residues 92 to 127 (KNRK…KTDE), 131 to 166 (EAVE…SKGL), 227 to 262 (MLKF…TVEN), 272 to 307 (WVKD…MNEY), and 308 to 343 (NALN…FTGS). 24 residues coordinate Ca(2+): Asp-105, Asp-107, Asp-109, Lys-111, Glu-116, Asp-144, Asp-146, Asp-148, His-150, Glu-155, Asp-240, Asp-242, Asp-244, Lys-246, Glu-251, Asp-285, Asn-287, Asp-289, Glu-296, Asp-321, Asn-323, Asn-325, His-327, and Glu-332.

The protein belongs to the CREC family.

It localises to the golgi apparatus lumen. In terms of biological role, may regulate calcium-dependent activities in the endoplasmic reticulum lumen or post-ER compartment. In Gallus gallus (Chicken), this protein is 45 kDa calcium-binding protein (SDF4).